The following is an 80-amino-acid chain: MPEQREKKKKDESDSVRAEGVVEEALPNTTFRVKLDTGHDILAYISGKMRIHYIRILPGDRVVLEISPYDTSRGRIVYRR.

The S1-like domain occupies 6-80 (EKKKKDESDS…TSRGRIVYRR (75 aa)).

The protein belongs to the IF-1 family. Component of the 30S ribosomal translation pre-initiation complex which assembles on the 30S ribosome in the order IF-2 and IF-3, IF-1 and N-formylmethionyl-tRNA(fMet); mRNA recruitment can occur at any time during PIC assembly.

The protein localises to the cytoplasm. In terms of biological role, one of the essential components for the initiation of protein synthesis. Stabilizes the binding of IF-2 and IF-3 on the 30S subunit to which N-formylmethionyl-tRNA(fMet) subsequently binds. Helps modulate mRNA selection, yielding the 30S pre-initiation complex (PIC). Upon addition of the 50S ribosomal subunit IF-1, IF-2 and IF-3 are released leaving the mature 70S translation initiation complex. This is Translation initiation factor IF-1 from Deinococcus radiodurans (strain ATCC 13939 / DSM 20539 / JCM 16871 / CCUG 27074 / LMG 4051 / NBRC 15346 / NCIMB 9279 / VKM B-1422 / R1).